A 112-amino-acid polypeptide reads, in one-letter code: Serum amyloid A protein (112 aa).

Gln1 carries the post-translational modification Pyrrolidone carboxylic acid. Basic and acidic residues predominate over residues 75 to 86 (MTRDQVREDTKA). The segment at 75–112 (MTRDQVREDTKADQFANEWGRSGKDPNHFRPPGLPDKY) is disordered.

Belongs to the SAA family. As to expression, expressed by the liver; secreted in plasma.

Its subcellular location is the secreted. Functionally, major acute phase reactant. Apolipoprotein of the HDL complex. This Ovis aries (Sheep) protein is Serum amyloid A protein (SAA1).